Consider the following 371-residue polypeptide: Spermidine/putrescine import ATP-binding protein PotA (371 aa).

An ABC transporter domain is found at 10-240; it reads VELRNVTKSY…PKNLFVARFI (231 aa). 42 to 49 provides a ligand contact to ATP; it reads GPSGCGKT.

It belongs to the ABC transporter superfamily. Spermidine/putrescine importer (TC 3.A.1.11.1) family. In terms of assembly, the complex is composed of two ATP-binding proteins (PotA), two transmembrane proteins (PotB and PotC) and a solute-binding protein (PotD).

The protein localises to the cell inner membrane. The enzyme catalyses ATP + H2O + polyamine-[polyamine-binding protein]Side 1 = ADP + phosphate + polyamineSide 2 + [polyamine-binding protein]Side 1.. Functionally, part of the ABC transporter complex PotABCD involved in spermidine/putrescine import. Responsible for energy coupling to the transport system. This chain is Spermidine/putrescine import ATP-binding protein PotA, found in Haemophilus ducreyi (strain 35000HP / ATCC 700724).